A 198-amino-acid chain; its full sequence is Recombination protein RecR (198 aa).

A C4-type zinc finger spans residues 58–73 (CKVCQTLTDKEICPIC). In terms of domain architecture, Toprim spans 81-175 (KVIMVVENTR…KVSRIASGVP (95 aa)).

The protein belongs to the RecR family.

May play a role in DNA repair. It seems to be involved in an RecBC-independent recombinational process of DNA repair. It may act with RecF and RecO. The chain is Recombination protein RecR from Lachnoclostridium phytofermentans (strain ATCC 700394 / DSM 18823 / ISDg) (Clostridium phytofermentans).